We begin with the raw amino-acid sequence, 80 residues long: Exodeoxyribonuclease 7 small subunit (80 aa).

This sequence belongs to the XseB family. Heterooligomer composed of large and small subunits.

It is found in the cytoplasm. The catalysed reaction is Exonucleolytic cleavage in either 5'- to 3'- or 3'- to 5'-direction to yield nucleoside 5'-phosphates.. Bidirectionally degrades single-stranded DNA into large acid-insoluble oligonucleotides, which are then degraded further into small acid-soluble oligonucleotides. The protein is Exodeoxyribonuclease 7 small subunit of Streptomyces avermitilis (strain ATCC 31267 / DSM 46492 / JCM 5070 / NBRC 14893 / NCIMB 12804 / NRRL 8165 / MA-4680).